Here is a 110-residue protein sequence, read N- to C-terminus: Auxin-responsive protein SAUR71 (110 aa).

Belongs to the ARG7 family. Highly expressed in the steles of roots and hypocotyls.

The protein resides in the cytoplasm. Plays a role in the regulation of cell expansion, root meristem patterning and auxin transport. The protein is Auxin-responsive protein SAUR71 of Arabidopsis thaliana (Mouse-ear cress).